Reading from the N-terminus, the 360-residue chain is Peptide chain release factor 1 (360 aa).

The residue at position 237 (glutamine 237) is an N5-methylglutamine.

It belongs to the prokaryotic/mitochondrial release factor family. In terms of processing, methylated by PrmC. Methylation increases the termination efficiency of RF1.

It localises to the cytoplasm. In terms of biological role, peptide chain release factor 1 directs the termination of translation in response to the peptide chain termination codons UAG and UAA. The polypeptide is Peptide chain release factor 1 (Pseudomonas entomophila (strain L48)).